The chain runs to 282 residues: Succinate dehydrogenase [ubiquinone] iron-sulfur subunit, mitochondrial (282 aa).

A 2Fe-2S ferredoxin-type domain is found at 43–131 (YRFNPEAPGA…STKIYPLPHM (89 aa)). The [2Fe-2S] cluster site is built by cysteine 91, cysteine 96, cysteine 99, and cysteine 111. One can recognise a 4Fe-4S ferredoxin-type domain in the interval 174 to 204 (ERDRLDGLYECILCACCSTSCPSYWWNADKY). [4Fe-4S] cluster-binding residues include cysteine 184, cysteine 187, and cysteine 190. Cysteine 194 provides a ligand contact to [3Fe-4S] cluster. Tryptophan 199 provides a ligand contact to a ubiquinone. Cysteine 241 and cysteine 247 together coordinate [3Fe-4S] cluster. Cysteine 251 provides a ligand contact to [4Fe-4S] cluster.

Belongs to the succinate dehydrogenase/fumarate reductase iron-sulfur protein family. As to quaternary structure, component of complex II composed of four subunits: a flavoprotein (FP), an iron-sulfur protein (IP), and a cytochrome b composed of a large and a small subunit. [2Fe-2S] cluster serves as cofactor. Requires [3Fe-4S] cluster as cofactor. [4Fe-4S] cluster is required as a cofactor.

Its subcellular location is the mitochondrion inner membrane. The catalysed reaction is a quinone + succinate = fumarate + a quinol. The protein operates within carbohydrate metabolism; tricarboxylic acid cycle; fumarate from succinate (eukaryal route): step 1/1. Iron-sulfur protein (IP) subunit of succinate dehydrogenase (SDH) that is involved in complex II of the mitochondrial electron transport chain and is responsible for transferring electrons from succinate to ubiquinone (coenzyme Q). The chain is Succinate dehydrogenase [ubiquinone] iron-sulfur subunit, mitochondrial from Caenorhabditis briggsae.